Reading from the N-terminus, the 201-residue chain is Glycerol-3-phosphate acyltransferase (201 aa).

A run of 5 helical transmembrane segments spans residues 10–30 (ALIL…GIVI), 59–79 (PAAL…VLIA), 87–107 (AAQL…WLGF), 116–136 (FLGT…LTWL), and 161–181 (ILLG…LIFI).

The protein belongs to the PlsY family. In terms of assembly, probably interacts with PlsX.

Its subcellular location is the cell inner membrane. The catalysed reaction is an acyl phosphate + sn-glycerol 3-phosphate = a 1-acyl-sn-glycero-3-phosphate + phosphate. It participates in lipid metabolism; phospholipid metabolism. Functionally, catalyzes the transfer of an acyl group from acyl-phosphate (acyl-PO(4)) to glycerol-3-phosphate (G3P) to form lysophosphatidic acid (LPA). This enzyme utilizes acyl-phosphate as fatty acyl donor, but not acyl-CoA or acyl-ACP. The protein is Glycerol-3-phosphate acyltransferase of Cereibacter sphaeroides (strain ATCC 17029 / ATH 2.4.9) (Rhodobacter sphaeroides).